Consider the following 380-residue polypeptide: Homoserine O-acetyltransferase (380 aa).

The AB hydrolase-1 domain occupies 59-363 (NVVMVLHALT…IYGHDGFLVE (305 aa)). The active-site Nucleophile is Ser164. Residue Arg234 participates in substrate binding. Active-site residues include Asp327 and His357. Asp358 provides a ligand contact to substrate.

Belongs to the AB hydrolase superfamily. MetX family. In terms of assembly, homodimer.

It localises to the cytoplasm. It catalyses the reaction L-homoserine + acetyl-CoA = O-acetyl-L-homoserine + CoA. Its pathway is amino-acid biosynthesis; L-methionine biosynthesis via de novo pathway; O-acetyl-L-homoserine from L-homoserine: step 1/1. In terms of biological role, transfers an acetyl group from acetyl-CoA to L-homoserine, forming acetyl-L-homoserine. The protein is Homoserine O-acetyltransferase of Mycolicibacterium smegmatis (strain ATCC 700084 / mc(2)155) (Mycobacterium smegmatis).